The following is a 655-amino-acid chain: Fructose-1,6-bisphosphatase class 3 (655 aa).

The protein belongs to the FBPase class 3 family. Mn(2+) serves as cofactor.

It carries out the reaction beta-D-fructose 1,6-bisphosphate + H2O = beta-D-fructose 6-phosphate + phosphate. It participates in carbohydrate biosynthesis; gluconeogenesis. This Porphyromonas gingivalis (strain ATCC BAA-308 / W83) protein is Fructose-1,6-bisphosphatase class 3.